The primary structure comprises 162 residues: MQYVTPDLCDAYPDLVQVVEPLFSNFGGRDSFGGEIVTIKCFEDNSLVKDQVDVDGTGKVMVVDGGGSLRRALLGDMLAEKAARNGWEGLIIYGCVRDVDVLAQTELGVQALASHPMKTDKRGIGDLNVPVTFCGVTFRPGEYVYADNNGIIVSPEPLSMPQ.

Substrate is bound by residues 75 to 78 (GDML) and Arg97. Asp98 serves as a coordination point for a divalent metal cation.

This sequence belongs to the class II aldolase/RraA-like family. In terms of assembly, homotrimer. A divalent metal cation is required as a cofactor.

It carries out the reaction 4-hydroxy-4-methyl-2-oxoglutarate = 2 pyruvate. The enzyme catalyses oxaloacetate + H(+) = pyruvate + CO2. Catalyzes the aldol cleavage of 4-hydroxy-4-methyl-2-oxoglutarate (HMG) into 2 molecules of pyruvate. Also contains a secondary oxaloacetate (OAA) decarboxylase activity due to the common pyruvate enolate transition state formed following C-C bond cleavage in the retro-aldol and decarboxylation reactions. The polypeptide is Putative 4-hydroxy-4-methyl-2-oxoglutarate aldolase (Stutzerimonas stutzeri (strain A1501) (Pseudomonas stutzeri)).